The chain runs to 190 residues: Sec-independent protein translocase protein TatB (190 aa).

The chain crosses the membrane as a helical span at residues 2–22 (LPDIGGTELLVIAAVALIVVG). The segment at 130–190 (IVSKPARKPP…KASTNSDITS (61 aa)) is disordered. The span at 134–144 (PARKPPAKKAA) shows a compositional bias: basic residues. Low complexity predominate over residues 145-163 (AKPAAKAELVSKPKASAKA).

It belongs to the TatB family. The Tat system comprises two distinct complexes: a TatABC complex, containing multiple copies of TatA, TatB and TatC subunits, and a separate TatA complex, containing only TatA subunits. Substrates initially bind to the TatABC complex, which probably triggers association of the separate TatA complex to form the active translocon.

It localises to the cell inner membrane. Functionally, part of the twin-arginine translocation (Tat) system that transports large folded proteins containing a characteristic twin-arginine motif in their signal peptide across membranes. Together with TatC, TatB is part of a receptor directly interacting with Tat signal peptides. TatB may form an oligomeric binding site that transiently accommodates folded Tat precursor proteins before their translocation. The sequence is that of Sec-independent protein translocase protein TatB from Caulobacter sp. (strain K31).